The chain runs to 31 residues: Photosystem II reaction center protein T (31 aa).

Residues 3 to 23 traverse the membrane as a helical segment; it reads ALVYVFLLVGTLMVIFFAIFF.

The protein belongs to the PsbT family. PSII is composed of 1 copy each of membrane proteins PsbA, PsbB, PsbC, PsbD, PsbE, PsbF, PsbH, PsbI, PsbJ, PsbK, PsbL, PsbM, PsbT, PsbX, PsbY, PsbZ, Psb30/Ycf12, at least 3 peripheral proteins of the oxygen-evolving complex and a large number of cofactors. It forms dimeric complexes.

Its subcellular location is the plastid. It localises to the chloroplast thylakoid membrane. Found at the monomer-monomer interface of the photosystem II (PS II) dimer, plays a role in assembly and dimerization of PSII. PSII is a light-driven water plastoquinone oxidoreductase, using light energy to abstract electrons from H(2)O, generating a proton gradient subsequently used for ATP formation. In Gracilaria tenuistipitata var. liui (Red alga), this protein is Photosystem II reaction center protein T.